Here is a 136-residue protein sequence, read N- to C-terminus: Large ribosomal subunit protein uL16c (136 aa).

The protein belongs to the universal ribosomal protein uL16 family. As to quaternary structure, part of the 50S ribosomal subunit.

It is found in the plastid. The protein localises to the chloroplast. In Buxus microphylla (Littleleaf boxwood), this protein is Large ribosomal subunit protein uL16c.